A 425-amino-acid chain; its full sequence is Histidine--tRNA ligase 1 (425 aa).

Belongs to the class-II aminoacyl-tRNA synthetase family. In terms of assembly, homodimer.

The protein localises to the cytoplasm. It catalyses the reaction tRNA(His) + L-histidine + ATP = L-histidyl-tRNA(His) + AMP + diphosphate + H(+). The sequence is that of Histidine--tRNA ligase 1 from Bacillus cereus (strain ZK / E33L).